Here is a 180-residue protein sequence, read N- to C-terminus: Large ribosomal subunit protein uL6 (180 aa).

It belongs to the universal ribosomal protein uL6 family. Part of the 50S ribosomal subunit.

In terms of biological role, this protein binds to the 23S rRNA, and is important in its secondary structure. It is located near the subunit interface in the base of the L7/L12 stalk, and near the tRNA binding site of the peptidyltransferase center. This is Large ribosomal subunit protein uL6 from Borrelia garinii subsp. bavariensis (strain ATCC BAA-2496 / DSM 23469 / PBi) (Borreliella bavariensis).